The following is a 117-amino-acid chain: Circadian clock oscillator protein KaiB (117 aa).

This sequence belongs to the KaiB family. As to quaternary structure, may undergo a major conformational rearrangment; in the free state forms homooligomers. When bound to KaiC switches to a monomeric thioredoxin-fold (KaiB(fs)). The active oscillator complex is probably KaiC(6):KaiB(6).

Component of the KaiBC clock protein complex, which constitutes the main circadian regulator in cyanobacteria; it may modify the ATPase activity of KaiC. Functionally, may be a metamorphic protein which reversibly switches between an inactive tetrameric fold and a rare, thioredoxin-like monomeric fold (KaiB(fs)). KaiB(fs) binds phospho-KaiC, and perhaps clock output effectors. The protein is Circadian clock oscillator protein KaiB of Prochlorococcus marinus (strain SARG / CCMP1375 / SS120).